A 358-amino-acid polypeptide reads, in one-letter code: UDP-N-acetylglucosamine--N-acetylmuramyl-(pentapeptide) pyrophosphoryl-undecaprenol N-acetylglucosamine transferase (358 aa).

Residues 11-13 (TGG), Arg-163, Ser-191, Ile-245, and Gln-290 each bind UDP-N-acetyl-alpha-D-glucosamine.

It belongs to the glycosyltransferase 28 family. MurG subfamily.

The protein localises to the cell inner membrane. It catalyses the reaction di-trans,octa-cis-undecaprenyl diphospho-N-acetyl-alpha-D-muramoyl-L-alanyl-D-glutamyl-meso-2,6-diaminopimeloyl-D-alanyl-D-alanine + UDP-N-acetyl-alpha-D-glucosamine = di-trans,octa-cis-undecaprenyl diphospho-[N-acetyl-alpha-D-glucosaminyl-(1-&gt;4)]-N-acetyl-alpha-D-muramoyl-L-alanyl-D-glutamyl-meso-2,6-diaminopimeloyl-D-alanyl-D-alanine + UDP + H(+). Its pathway is cell wall biogenesis; peptidoglycan biosynthesis. In terms of biological role, cell wall formation. Catalyzes the transfer of a GlcNAc subunit on undecaprenyl-pyrophosphoryl-MurNAc-pentapeptide (lipid intermediate I) to form undecaprenyl-pyrophosphoryl-MurNAc-(pentapeptide)GlcNAc (lipid intermediate II). This chain is UDP-N-acetylglucosamine--N-acetylmuramyl-(pentapeptide) pyrophosphoryl-undecaprenol N-acetylglucosamine transferase, found in Herminiimonas arsenicoxydans.